A 306-amino-acid chain; its full sequence is Diterpene cyclase eriG (306 aa).

2 consecutive transmembrane segments (helical) span residues 13-33 (IFFG…SIFA) and 43-63 (ATLV…IYFF). A glycan (N-linked (GlcNAc...) asparagine) is linked at N64. Helical transmembrane passes span 115–135 (FLPE…TSYG), 161–181 (IAPA…WAGL), 213–233 (LIIT…AGIF), and 265–285 (MFYT…GLGL).

It belongs to the UbiA prenyltransferase family. The cofactor is Mg(2+).

The protein localises to the membrane. The catalysed reaction is (2E,6E,10E)-geranylgeranyl diphosphate = (-)-cyatha-3,12-diene + diphosphate. It functions in the pathway secondary metabolite biosynthesis. EDTA completely blocks the reaction. In terms of biological role, diterpene cyclase; part of the gene cluster that mediates the biosynthesis of erinacines, cyathane-xylosides that show unique biological activities, including leishmanicidal activity, stimulating activity for nerve growth-factor synthesis, and agonistic activity toward the kappa opioid receptor. Within the pathway, eriG acts as a diterpene cyclase that converts geranylgeranyl diphosphate (GGPP) into cyatha-3,12-diene. EriG is unable to use geranyl diphosphate (GPP) or farnesyl diphosphate (FPP) as substrates. The first step of the erinacines biosynthesis pathway is catalyzed by the geranylgeranyl diphosphate (GGPP) synthase eriE via conversion of farnesyl pyrophosphate and isopentyl pyrophosphate into geranylgeranyl pyrophosphate (GGPP). GGPP is then substrate of the diterpene cyclase eriG for the production of cyatha-3,12-diene. The cytochrome P450 monooxygenase eriI then hydroxylates cyatha-3,12-diene at C-14 of the seven-membered ring to produce erinacol, which is further hydroxylated at C-15 by the cytochrome P450 monooxygenase eriC to yield cyathadiol. The cytochrome P450 monooxygenase eriA then catalyzes C-11 hydroxylation in the presence of the short chain dehydrogenase/reductase (SDR) eriH, which leads to the production of cyathatriol. The acetyltransferase eriL converts cyathatriol into 11-O-acetyl-cyathatriol. The SDR eriH catalyzes further oxidation of 11-O-acetyl-cyathatriol into 1-O-acetylcyathin A3. Finally, the glycosyl transferase eriJ tranfers xylose from UDP-xylose onto C-14 of 11-O-acetyl-cyathatriol to form eracine Q. EriJ is also able to convert 11-O-acetyl-cyathatriol to eracine Q2 by using UDP-D-glucose as cosubstrate, but at a lower rate. This Hericium erinaceus (Lion's mane mushroom) protein is Diterpene cyclase eriG.